A 1096-amino-acid chain; its full sequence is Lysine-specific demethylase 4B (1096 aa).

The 43-residue stretch at 15 to 57 (IMTFRPTMEEFKDFNKYVAYIESQGAHRAGLAKIIPPKEWKPR) folds into the JmjN domain. Tyr133 is a binding site for 2-oxoglutarate. A JmjC domain is found at 146-309 (VAQWNIGSLR…YGKVATQCTC (164 aa)). The Fe cation site is built by His189 and Glu191. Residues Asn199 and Lys207 each coordinate 2-oxoglutarate. Zn(2+) contacts are provided by Cys235 and His241. Lys242 is a 2-oxoglutarate binding site. His277 lines the Fe cation pocket. Cys307 and Cys309 together coordinate Zn(2+). Basic residues predominate over residues 369–382 (LLRRSHRKRSQPKK). Disordered stretches follow at residues 369–478 (LLRR…SEEA) and 557–649 (KGPT…VSDP). Low complexity predominate over residues 391 to 406 (PGEGTAGAALLEEAGG). Over residues 413 to 425 (GPEVDPEEEEEEP) the composition is skewed to acidic residues. Positions 430 to 443 (HGREAEGAEEDGRG) are enriched in basic and acidic residues. Residues 444–458 (KLRPTKAKSERKKKS) show a composition bias toward basic residues. The residue at position 566 (Ser566) is a Phosphoserine. Lys602 is modified (N6-acetyllysine). Positions 632–648 (SSDEEASPFSGEEDVSD) are enriched in acidic residues. Residues 731 to 789 (MCFTSGGENTEPLPANSYIGDDGTSPLIACGKCCLQVHASCYGIRPELVNEGWTCSRCA) form a PHD-type 1 zinc finger. The C2HC pre-PHD-type zinc-finger motif lies at 794–827 (TAECCLCNLRGGALQMTTDRRWIHVICAIAVPEA). The PHD-type 2 zinc-finger motif lies at 850 to 907 (LKCVYCRKRMKKVSGACIQCSYEHCSTSFHVTCAHAAGVLMEPDDWPYVVSITCLKHK). Tudor domains follow at residues 917–974 (RAVS…CVQL) and 975–1031 (GPPS…EELP). The segment at 1037–1073 (RLSLSTGAPQEPAFSGEEAKAAKRPRVGTPLATEDSG) is disordered. Thr1065 is subject to Phosphothreonine.

This sequence belongs to the JHDM3 histone demethylase family. Fe(2+) is required as a cofactor.

The protein localises to the nucleus. It catalyses the reaction N(6),N(6),N(6)-trimethyl-L-lysyl(9)-[histone H3] + 2 2-oxoglutarate + 2 O2 = N(6)-methyl-L-lysyl(9)-[histone H3] + 2 formaldehyde + 2 succinate + 2 CO2. Its function is as follows. Histone demethylase that specifically demethylates 'Lys-9' of histone H3, thereby playing a role in histone code. Does not demethylate histone H3 'Lys-4', H3 'Lys-27', H3 'Lys-36' nor H4 'Lys-20'. Only able to demethylate trimethylated H3 'Lys-9', with a weaker activity than KDM4A, KDM4C and KDM4D. Demethylation of Lys residue generates formaldehyde and succinate. Plays a critical role in the development of the central nervous system (CNS). This chain is Lysine-specific demethylase 4B (KDM4B), found in Homo sapiens (Human).